The chain runs to 311 residues: HPr kinase/phosphorylase (311 aa).

Catalysis depends on residues His139 and Lys160. 154–161 (GDSGVGKS) provides a ligand contact to ATP. Ser161 contacts Mg(2+). Asp178 (proton acceptor; for phosphorylation activity. Proton donor; for dephosphorylation activity) is an active-site residue. The segment at 202-211 (LEIRGIGIID) is important for the catalytic mechanism of both phosphorylation and dephosphorylation. Glu203 is a binding site for Mg(2+). Residue Arg244 is part of the active site. Residues 265 to 270 (PVKTGR) are important for the catalytic mechanism of dephosphorylation.

The protein belongs to the HPrK/P family. In terms of assembly, homohexamer. The cofactor is Mg(2+).

The enzyme catalyses [HPr protein]-L-serine + ATP = [HPr protein]-O-phospho-L-serine + ADP + H(+). It carries out the reaction [HPr protein]-O-phospho-L-serine + phosphate + H(+) = [HPr protein]-L-serine + diphosphate. In terms of biological role, catalyzes the ATP- as well as the pyrophosphate-dependent phosphorylation of a specific serine residue in HPr, a phosphocarrier protein of the phosphoenolpyruvate-dependent sugar phosphotransferase system (PTS). HprK/P also catalyzes the pyrophosphate-producing, inorganic phosphate-dependent dephosphorylation (phosphorolysis) of seryl-phosphorylated HPr (P-Ser-HPr). The two antagonistic activities of HprK/P are regulated by several intracellular metabolites, which change their concentration in response to the absence or presence of rapidly metabolisable carbon sources (glucose, fructose, etc.) in the growth medium. Therefore, by controlling the phosphorylation state of HPr, HPrK/P is a sensor enzyme that plays a major role in the regulation of carbon metabolism and sugar transport: it mediates carbon catabolite repression (CCR), and regulates PTS-catalyzed carbohydrate uptake and inducer exclusion. In Levilactobacillus brevis (strain ATCC 367 / BCRC 12310 / CIP 105137 / JCM 1170 / LMG 11437 / NCIMB 947 / NCTC 947) (Lactobacillus brevis), this protein is HPr kinase/phosphorylase.